We begin with the raw amino-acid sequence, 219 residues long: Thiopurine S-methyltransferase (219 aa).

Residues tryptophan 10, leucine 45, glutamate 66, and arginine 123 each contribute to the S-adenosyl-L-methionine site.

This sequence belongs to the class I-like SAM-binding methyltransferase superfamily. TPMT family.

The protein resides in the cytoplasm. The enzyme catalyses S-adenosyl-L-methionine + a thiopurine = S-adenosyl-L-homocysteine + a thiopurine S-methylether.. In Shewanella frigidimarina (strain NCIMB 400), this protein is Thiopurine S-methyltransferase.